Reading from the N-terminus, the 160-residue chain is UPF0262 protein BSUIS_A0274 (160 aa).

This sequence belongs to the UPF0262 family.

The protein is UPF0262 protein BSUIS_A0274 of Brucella suis (strain ATCC 23445 / NCTC 10510).